Consider the following 512-residue polypeptide: Apolipoprotein N-acyltransferase (512 aa).

A run of 6 helical transmembrane segments spans residues 5–25, 56–76, 92–112, 118–138, 168–188, and 195–215; these read LDKY…FAAA, FAVS…FYWI, VPLT…CFWL, LPRG…TEFA, LGGI…LVLA, and SGKR…GYTA. The 245-residue stretch at 233–477 folds into the CN hydrolase domain; that stretch reads LQGNIDQTLK…ETVLEGHIKG (245 aa). Glutamate 271 functions as the Proton acceptor in the catalytic mechanism. The active site involves lysine 337. Cysteine 389 acts as the Nucleophile in catalysis. Residues 487 to 507 form a helical membrane-spanning segment; the sequence is TGSSWWLMGILALAALILFIF.

It belongs to the CN hydrolase family. Apolipoprotein N-acyltransferase subfamily.

The protein resides in the cell inner membrane. The catalysed reaction is N-terminal S-1,2-diacyl-sn-glyceryl-L-cysteinyl-[lipoprotein] + a glycerophospholipid = N-acyl-S-1,2-diacyl-sn-glyceryl-L-cysteinyl-[lipoprotein] + a 2-acyl-sn-glycero-3-phospholipid + H(+). Its pathway is protein modification; lipoprotein biosynthesis (N-acyl transfer). Its function is as follows. Catalyzes the phospholipid dependent N-acylation of the N-terminal cysteine of apolipoprotein, the last step in lipoprotein maturation. The polypeptide is Apolipoprotein N-acyltransferase (Neisseria meningitidis serogroup B (strain ATCC BAA-335 / MC58)).